The following is a 312-amino-acid chain: Malate dehydrogenase (312 aa).

NAD(+)-binding positions include 12-17 and aspartate 36; that span reads GAGFTG. Residues arginine 87 and arginine 93 each coordinate substrate. NAD(+) contacts are provided by residues asparagine 100 and 123-125; that span reads LTN. Asparagine 125 provides a ligand contact to substrate. Phosphoserine is present on serine 149. Arginine 156 is a binding site for substrate. Residue histidine 180 is the Proton acceptor of the active site.

Belongs to the LDH/MDH superfamily. MDH type 3 family.

The enzyme catalyses (S)-malate + NAD(+) = oxaloacetate + NADH + H(+). In terms of biological role, catalyzes the reversible oxidation of malate to oxaloacetate. In Bacillus cereus (strain ATCC 14579 / DSM 31 / CCUG 7414 / JCM 2152 / NBRC 15305 / NCIMB 9373 / NCTC 2599 / NRRL B-3711), this protein is Malate dehydrogenase.